Here is a 660-residue protein sequence, read N- to C-terminus: Acetyl-coenzyme A synthetase (660 aa).

Residues Arg197–Lys200 and Thr317 each bind CoA. ATP contacts are provided by residues Gly397–Pro399, Asp421–Thr426, Asp512, and Arg528. Ser536 provides a ligand contact to CoA. Arg539 provides a ligand contact to ATP. Residues Val550, His552, and Val555 each contribute to the Mg(2+) site. Lys625 is subject to N6-acetyllysine.

It belongs to the ATP-dependent AMP-binding enzyme family. The cofactor is Mg(2+). Acetylated. Deacetylation by the SIR2-homolog deacetylase activates the enzyme.

It carries out the reaction acetate + ATP + CoA = acetyl-CoA + AMP + diphosphate. Functionally, catalyzes the conversion of acetate into acetyl-CoA (AcCoA), an essential intermediate at the junction of anabolic and catabolic pathways. AcsA undergoes a two-step reaction. In the first half reaction, AcsA combines acetate with ATP to form acetyl-adenylate (AcAMP) intermediate. In the second half reaction, it can then transfer the acetyl group from AcAMP to the sulfhydryl group of CoA, forming the product AcCoA. This is Acetyl-coenzyme A synthetase from Burkholderia thailandensis (strain ATCC 700388 / DSM 13276 / CCUG 48851 / CIP 106301 / E264).